We begin with the raw amino-acid sequence, 424 residues long: Gamma-glutamyl phosphate reductase (424 aa).

It belongs to the gamma-glutamyl phosphate reductase family.

The protein localises to the cytoplasm. The catalysed reaction is L-glutamate 5-semialdehyde + phosphate + NADP(+) = L-glutamyl 5-phosphate + NADPH + H(+). The protein operates within amino-acid biosynthesis; L-proline biosynthesis; L-glutamate 5-semialdehyde from L-glutamate: step 2/2. In terms of biological role, catalyzes the NADPH-dependent reduction of L-glutamate 5-phosphate into L-glutamate 5-semialdehyde and phosphate. The product spontaneously undergoes cyclization to form 1-pyrroline-5-carboxylate. The chain is Gamma-glutamyl phosphate reductase from Dehalococcoides mccartyi (strain CBDB1).